We begin with the raw amino-acid sequence, 907 residues long: Nuclear receptor coactivator 7 (907 aa).

Over residues 1-12 the composition is skewed to basic and acidic residues; that stretch reads METKEEKKERRQ. The stretch at 1-29 forms a coiled coil; the sequence is METKEEKKERRQGYFARLKKKRQAKQNTE. Disordered regions lie at residues 1–51, 63–83, and 99–121; these read METK…DDES, DNCK…RKKK, and YSTD…SQKP. A compositionally biased stretch (polar residues) spans 25-41; that stretch reads KQNTETVSANSPGSPVS. Basic and acidic residues-rich tracts occupy residues 68–78 and 99–116; these read AGEKETVPEKE and YSTD…EKKM. A LysM domain is found at 125–168; that stretch reads IEYTAGNQDTINSIALKFNITPNKLVELNKLFTHTIVPGQILFV. 2 disordered regions span residues 335-373 and 401-443; these read LSKE…QSSE and DPHV…MDRG. Residues 401–422 are compositionally biased toward basic and acidic residues; the sequence is DPHVKEPSEEKNVSDIRTKEDS. The region spanning 746–907 is the TLDc domain; it reads ALLENMHIEQ…IQDVEVWTFE (162 aa).

This sequence belongs to the OXR1 family.

Its subcellular location is the nucleus. Its function is as follows. Enhances the transcriptional activities of several nuclear receptors. This chain is Nuclear receptor coactivator 7 (NCOA7), found in Gallus gallus (Chicken).